The following is a 150-amino-acid chain: 3-dehydroquinate dehydratase (150 aa).

Catalysis depends on Tyr22, which acts as the Proton acceptor. Residues Asn73, His79, and Asp86 each coordinate substrate. The active-site Proton donor is His99. Residues 100 to 101 (LT) and Arg110 each bind substrate.

Belongs to the type-II 3-dehydroquinase family. As to quaternary structure, homododecamer.

The enzyme catalyses 3-dehydroquinate = 3-dehydroshikimate + H2O. It functions in the pathway metabolic intermediate biosynthesis; chorismate biosynthesis; chorismate from D-erythrose 4-phosphate and phosphoenolpyruvate: step 3/7. Functionally, catalyzes a trans-dehydration via an enolate intermediate. This Desulforudis audaxviator (strain MP104C) protein is 3-dehydroquinate dehydratase.